Reading from the N-terminus, the 162-residue chain is Small ribosomal subunit protein bS16 (162 aa).

Positions 113–162 (ADGGPTTEATKPKKKSPAKKAAKAAEPAPQPEQPDTPALGGEQAELTAES) are disordered. Positions 124-134 (PKKKSPAKKAA) are enriched in basic residues.

Belongs to the bacterial ribosomal protein bS16 family.

The chain is Small ribosomal subunit protein bS16 from Mycobacterium tuberculosis (strain ATCC 25177 / H37Ra).